Reading from the N-terminus, the 415-residue chain is Gamma-glutamyl phosphate reductase (415 aa).

It belongs to the gamma-glutamyl phosphate reductase family.

It localises to the cytoplasm. The enzyme catalyses L-glutamate 5-semialdehyde + phosphate + NADP(+) = L-glutamyl 5-phosphate + NADPH + H(+). It functions in the pathway amino-acid biosynthesis; L-proline biosynthesis; L-glutamate 5-semialdehyde from L-glutamate: step 2/2. Functionally, catalyzes the NADPH-dependent reduction of L-glutamate 5-phosphate into L-glutamate 5-semialdehyde and phosphate. The product spontaneously undergoes cyclization to form 1-pyrroline-5-carboxylate. This chain is Gamma-glutamyl phosphate reductase, found in Pseudoalteromonas translucida (strain TAC 125).